We begin with the raw amino-acid sequence, 565 residues long: Periplasmic trehalase (565 aa).

The N-terminal stretch at 1–30 (MKSPAPSRPQKMALIPACIFLCFAALSVQA) is a signal peptide. Substrate-binding positions include R152, 159-160 (WD), N196, 205-207 (RSQ), 277-279 (RPE), and G310. Catalysis depends on proton donor/acceptor residues D312 and E496. A substrate-binding site is contributed by E511. The interval 538 to 565 (PCDNVPATRPTVKSATTQPSTKEAQPTP) is disordered. Residues 548–565 (TVKSATTQPSTKEAQPTP) show a composition bias toward polar residues.

Belongs to the glycosyl hydrolase 37 family. In terms of assembly, monomer.

It localises to the periplasm. It carries out the reaction alpha,alpha-trehalose + H2O = alpha-D-glucose + beta-D-glucose. In terms of biological role, provides the cells with the ability to utilize trehalose at high osmolarity by splitting it into glucose molecules that can subsequently be taken up by the phosphotransferase-mediated uptake system. In Escherichia coli (strain 55989 / EAEC), this protein is Periplasmic trehalase.